The chain runs to 310 residues: UPF0761 membrane protein VSAL_I2938 (310 aa).

The next 6 membrane-spanning stretches (helical) occupy residues 34–54 (YMAYITLLSLVPLVTVLLSVL), 97–117 (MTAVGSGFLFVASVMLISAID), 136–156 (FSLYWMILTLGPLLVWASLAA), 178–198 (LLGWLPIILSFSAFLGLYLLV), 207–227 (HALVGAMSAGCLFEVSKVGFA), and 242–262 (ALAAVPILFVWIYLCWIIVLI).

This sequence belongs to the UPF0761 family.

Its subcellular location is the cell inner membrane. This is UPF0761 membrane protein VSAL_I2938 from Aliivibrio salmonicida (strain LFI1238) (Vibrio salmonicida (strain LFI1238)).